The sequence spans 489 residues: Corticosteroid-binding protein (489 aa).

To yeast FMS1.

Functionally, may be a flavoprotein with enzymatic activity. This chain is Corticosteroid-binding protein (CBP1), found in Candida albicans (strain SC5314 / ATCC MYA-2876) (Yeast).